Here is a 31-residue protein sequence, read N- to C-terminus: Nemertide alpha-2 (31 aa).

Cystine bridges form between Cys2–Cys16, Cys9–Cys20, and Cys15–Cys26. 4-hydroxyproline is present on residues Pro28 and Pro29.

Belongs to the nemertide family. As to expression, confined to the epidermis and to the mucus layer.

It localises to the secreted. Toxin with similar potency against both insect and mammalian sodium channels (Nav). Delays the inactivation of most Nav channels tested (B.germanica (BgNav1); EC(50)=87.2 nM, human Nav1.1/SCN1A; EC(50)=125.8 nM, rat Nav1.2/SCN2A; EC(50)=97.9 nM, rat Nav1.3/SCN3A; EC(50)=127.7 nM, rat Nav1.4/SCN4A; EC(50)=1150.3 nM, human Nav1.5/SCN5A; EC(50)=149.2 nM, mouse Nav1.6/SCN8A; EC(50)=1361.8 nM, human Nav1.9/SCN9A; EC(50)=1296.7 nM). Inactivation is completely prevented by a concentration of 1 uM, resulting in sustained, non-inactivating current. In addition, the toxin significantly enhances the recovery from inactivation, and the open state is not required for the toxin to interact with the channel. In vivo, injection into brine shrimp (Artemia salina) stops movement or causes death after 24 hours (EC(50)=2.9 uM). The protein is Nemertide alpha-2 of Lineus longissimus (Bootlace worm).